A 319-amino-acid chain; its full sequence is Olfactory receptor 10Q1 (319 aa).

Residues 1–29 (MPVGKLVFNQSEPTEFVFRAFTTATEFQV) are Extracellular-facing. A glycan (N-linked (GlcNAc...) asparagine) is linked at Asn-9. Residues 30–50 (LLFLLFLLLYLMILCGNTAII) traverse the membrane as a helical segment. Topologically, residues 51-58 (WVVCTHST) are cytoplasmic. Residues 59–79 (LRTPMYFFLSNLSFLELCYTT) traverse the membrane as a helical segment. Residues 80-103 (VVVPLMLSNILGAQKPISLAGCGA) lie on the Extracellular side of the membrane. Residues Cys-101 and Cys-194 are joined by a disulfide bond. The helical transmembrane segment at 104-124 (QMFFFVTLGSTDCFLLAIMAY) threads the bilayer. The Cytoplasmic portion of the chain corresponds to 125-143 (DRYVAICHPLHYTLIMTRE). The helical transmembrane segment at 144 to 164 (LCTQMLGGALGLALFPSLQLT) threads the bilayer. Residues 165-202 (ALIFTLPFCGHHQEINHFLCDVPPVLRLACADIRVHQA) lie on the Extracellular side of the membrane. The chain crosses the membrane as a helical span at residues 203 to 222 (VLYVVSILVLTIPFLLICVS). At 223–242 (YVFITCAILSIRSAEGRRRA) the chain is on the cytoplasmic side. A helical membrane pass occupies residues 243–263 (FSTCSFHLTVVLLQYGCCSLV). The Extracellular portion of the chain corresponds to 264–276 (YLRPRSSTSEDED). Residues 277–297 (SQIALVYTFVTPLLNPLLYSL) traverse the membrane as a helical segment. Residues 298-319 (RNKDVKGALRSAIIRKAASDAN) lie on the Cytoplasmic side of the membrane.

It belongs to the G-protein coupled receptor 1 family.

The protein localises to the cell membrane. Its function is as follows. Odorant receptor. The chain is Olfactory receptor 10Q1 (OR10Q1) from Homo sapiens (Human).